The chain runs to 1006 residues: Unconventional myosin-Id (1006 aa).

Alanine 2 is subject to N-acetylalanine. Positions phenylalanine 9–alanine 695 constitute a Myosin motor domain. Residue glycine 102–threonine 109 coordinates ATP. Serine 200 bears the Phosphoserine mark. A Phosphotyrosine modification is found at tyrosine 536. The interval methionine 572–aspartate 594 is actin-binding. 2 consecutive IQ domains span residues valine 699 to lysine 719 and threonine 721 to histidine 741. Positions glycine 812–glycine 1005 constitute a TH1 domain.

This sequence belongs to the TRAFAC class myosin-kinesin ATPase superfamily. Myosin family. As to quaternary structure, interacts (via the two IQ motifs) with calmodulin. Binds an additional calmodulin chain via a third, C-terminal region. Interacts with F-actin. Detected in enterocytes at the intestinal brush border membrane. Detected at the tip of intestinal microvilli (at protein level).

Its subcellular location is the cytoplasm. The protein resides in the perikaryon. It is found in the cell projection. The protein localises to the dendrite. It localises to the early endosome. Its subcellular location is the cell cortex. The protein resides in the basolateral cell membrane. In terms of biological role, unconventional myosin that functions as actin-based motor protein with ATPase activity. Plays a role in endosomal protein trafficking, and especially in the transfer of cargo proteins from early to recycling endosomes. Required for normal planar cell polarity in ciliated tracheal cells, for normal rotational polarity of cilia, and for coordinated, unidirectional ciliary movement in the trachea. Required for normal, polarized cilia organization in brain ependymal epithelial cells. The sequence is that of Unconventional myosin-Id from Mus musculus (Mouse).